The sequence spans 877 residues: Protein SEY1 homolog (877 aa).

The Cytoplasmic portion of the chain corresponds to 1–735 (MVAFAGGART…LRSIEGEKQN (735 aa)). The region spanning 49-307 (GITYHVVGVL…VPLDGIPSYL (259 aa)) is the GB1/RHD3-type G domain. 59–66 (GGQSSGKS) contributes to the GTP binding site. The stretch at 388-410 (RIDIVRKTEAELEEELLKVELKL) forms a coiled coil. A helical membrane pass occupies residues 736-756 (LPAWVLPVLLLLGWNEIWYVL). Topologically, residues 757–759 (SSP) are lumenal. The chain crosses the membrane as a helical span at residues 760–780 (VLLVVVVIIAAVFLRGFLLTQ). Over 781-877 (WAIFEETGPT…KEEEVPTQKE (97 aa)) the chain is Cytoplasmic. The interval 850–877 (PTVLPPSTTSATLTRRLKKEEEVPTQKE) is disordered. Over residues 867–877 (KKEEEVPTQKE) the composition is skewed to basic and acidic residues.

This sequence belongs to the TRAFAC class dynamin-like GTPase superfamily. GB1/RHD3 GTPase family. RHD3 subfamily.

It localises to the endoplasmic reticulum membrane. Functionally, probable GTP-binding protein that may be involved in cell development. This Trypanosoma cruzi (strain CL Brener) protein is Protein SEY1 homolog.